Consider the following 705-residue polypeptide: Elongation factor G (705 aa).

The region spanning 8 to 294 (ELYRNFGIMA…SVIDYLPSPL (287 aa)) is the tr-type G domain. GTP contacts are provided by residues 17-24 (AHIDAGKT), 92-96 (DTPGH), and 146-149 (NKMD).

This sequence belongs to the TRAFAC class translation factor GTPase superfamily. Classic translation factor GTPase family. EF-G/EF-2 subfamily.

It localises to the cytoplasm. Its function is as follows. Catalyzes the GTP-dependent ribosomal translocation step during translation elongation. During this step, the ribosome changes from the pre-translocational (PRE) to the post-translocational (POST) state as the newly formed A-site-bound peptidyl-tRNA and P-site-bound deacylated tRNA move to the P and E sites, respectively. Catalyzes the coordinated movement of the two tRNA molecules, the mRNA and conformational changes in the ribosome. This Cereibacter sphaeroides (strain KD131 / KCTC 12085) (Rhodobacter sphaeroides) protein is Elongation factor G.